A 4080-amino-acid chain; its full sequence is Hybrid PKS-NRPS synthetase poxE (4080 aa).

The Ketosynthase family 3 (KS3) domain occupies 8 to 442 (REPIAIVGSG…GTNAHAIIEA (435 aa)). Residues cysteine 181, histidine 320, and histidine 362 each act as for beta-ketoacyl synthase activity in the active site. The tract at residues 554–878 (VFTGQGAQWA…QRGMNDVEAM (325 aa)) is malonyl-CoA:ACP transacylase (MAT) domain. The segment at 944–1078 (HPILGTRCPD…GRLVITYGPV (135 aa)) is N-terminal hotdog fold. A PKS/mFAS DH domain is found at 944–1246 (HPILGTRCPD…AVPLEATNAD (303 aa)). Residues 945–1243 (PILGTRCPDG…GIHAVPLEAT (299 aa)) form a dehydratase (DH) domain region. The Proton acceptor; for dehydratase activity role is filled by histidine 976. The C-terminal hotdog fold stretch occupies residues 1093–1246 (MVDVPSERFY…AVPLEATNAD (154 aa)). The active-site Proton donor; for dehydratase activity is aspartate 1152. Residues 1400–1585 (HFSDYLASVV…GVDTFTSDAD (186 aa)) are methyltransferase (MT) domain. Residues 2118 to 2292 (TYWLVGLTGS…AGSVMNIGAI (175 aa)) form a ketoreductase (KR)domain region. The segment at 2399 to 2478 (TTDEIYEVIK…TIGEIIKFVL (80 aa)) is peptidyl carrier protein. Positions 2405-2481 (EVIKECFIVK…EIIKFVLEKL (77 aa)) constitute a Carrier 1 domain. The residue at position 2441 (serine 2441) is an O-(pantetheine 4'-phosphoryl)serine. The tract at residues 2488-2569 (SLGLSPPTGA…AASPSIHTEE (82 aa)) is disordered. The segment covering 2511 to 2525 (VVVERRNVPRLEKKI) has biased composition (basic and acidic residues). Over residues 2528–2545 (SAGSRTSSSVTGTSKSVS) the composition is skewed to low complexity. Positions 2551–2565 (DTASSQTSEAASPSI) are enriched in polar residues. A condensation region spans residues 2607 to 3036 (KEPLSFGQSR…DSKQPGGHVS (430 aa)). An adenylation region spans residues 3069-3478 (DMAKQYPQKL…DGRLRIEGRI (410 aa)). The region spanning 3593-3673 (AHLNEAQAQM…KMALLIKPQE (81 aa)) is the Carrier 2 domain. Residues 3598 to 3670 (AQAQMVQLWE…TLEKMALLIK (73 aa)) are thiolation. Serine 3633 carries the post-translational modification O-(pantetheine 4'-phosphoryl)serine. The reductase (RED) domain stretch occupies residues 3740-3959 (LTGATGFIGQ…DFVPVEQVVR (220 aa)).

In the C-terminal section; belongs to the NRP synthetase family.

Its pathway is secondary metabolite biosynthesis. In terms of biological role, hybrid PKS-NRPS synthetase; part of the gene cluster that mediates the biosynthesis of oxaleimides, cytotoxic compounds containing an unusual disubstituted succinimide moiety. The first step of the pathway is provided by the HR-PKS poxF that serves in a new mode of collaborative biosynthesis with the PKS-NRPS poxE, by providing the olefin containing amino acid substrate via the synthesis of an ACP-bound dec-4-enoate. The cytochrome P450 monooxygenase poxM-catalyzed oxidation at the alpha-position creates the enzyme-bound 2-hydroxydec-4-enoyl-ACP thioester, which may be prone to spontaneous hydrolysis to yield 2-hydroxydec-4-enoic acid due to increased electrophilicity of the carbonyl. 2-hydroxydec-4-enoic acid can then be further oxidized by poxM to yield the alpha-ketoacid 2-oxodec-4-enoicacid, which is reductively aminated by the aminotransferase poxL to yield (S,E)-2-aminodec-4-enoic acid. The Hybrid PKS-NRPS synthetase poxE then performs condensation between the octaketide product of its PKS modules and the amino group of (S,E)-2-aminodec-4-enoic acid which is activated and incorporated by the adenylation domain. The resulting aminoacyl product can be cyclized by the Diels-Alderase PoxQ and reductively released by the reductive (R) domain of poxE to yield an aldehyde intermediate. The released aldehyde is then substrate for a Knoevenagel condensation by the hydrolyase poxO followed by an oxidation at the 5-position of the pyrrolidone ring. The presence of the olefin from the amino acid building block allows for migration of the substituted allyl group to occur. This allylic transposition reaction takes place in a conjugate addition, semipinacol-like fashion to yield a succinimide intermediate. Iterative two-electron oxidations of the C7 methyl of the succinimide intermediate to the carboxylic acid can be catalyzed by one of two remaining cytochrome P450 monooxygenasess poxC or poxD to yield oxaleimide A. Subsequent oxidation yields the maleimide scaffold oxaleimide I. Both oxaleimide A and oxaleimide I can undergo oxidative modifications in the decalin ring to yield the series of products oxaleimides B to H. The chain is Hybrid PKS-NRPS synthetase poxE from Penicillium oxalicum.